Consider the following 431-residue polypeptide: Galactose-3-O-sulfotransferase 3 (431 aa).

Topologically, residues 1 to 19 (MPPILQRLQQSTKMMSHRK) are cytoplasmic. The chain crosses the membrane as a helical; Signal-anchor for type II membrane protein span at residues 20–40 (ILLLVLGCSTVSLLIHQGSQL). Over 41–431 (SWYPKLFPLS…RALPRIPQGT (391 aa)) the chain is Lumenal. 4 N-linked (GlcNAc...) asparagine glycosylation sites follow: Asn-91, Asn-110, Asn-177, and Asn-302. Residues 400–431 (KRRGGVRSRPESVLDNPPPRPIRALPRIPQGT) are disordered. Over residues 421 to 431 (IRALPRIPQGT) the composition is skewed to low complexity.

The protein belongs to the galactose-3-O-sulfotransferase family. Mg(2+) is required as a cofactor.

It localises to the golgi apparatus. It is found in the golgi stack membrane. Its pathway is protein modification; carbohydrate sulfation. Transfers a sulfate to position 3 of non-reducing beta-galactosyl residues in N-glycans and core2-branched O-glycans. Has high activity towards Gal-beta-1,4-GlcNAc, Gal-beta-1,4(Fuc-alpha-1,3)GlcNAc and lower activity towards Gal-beta-1,3(Fuc-alpha-1,4)GlcNAc. This is Galactose-3-O-sulfotransferase 3 (Gal3st3) from Mus musculus (Mouse).